The following is a 284-amino-acid chain: P2R1A-PPP2R2A-interacting phosphatase regulator 1 (284 aa).

Disordered stretches follow at residues 1 to 32, 112 to 198, and 235 to 284; these read MAQEKMELDLELPPGSAAAPSDGGGLRRSNSA, EESL…PIKR, and AHTL…LPID. Low complexity-rich tracts occupy residues 152-164 and 172-184; these read SPSLQSLVSSSGL and PTRRFSSRRSQSP. Over residues 258–269 the composition is skewed to polar residues; that stretch reads STGSPVSLSDSR.

This sequence belongs to the FAM122 family.

The protein localises to the nucleus. It localises to the cytoplasm. Its function is as follows. Acts as an inhibitor of serine/threonine-protein phosphatase 2A (PP2A) activity. Potentiates ubiquitin-mediated proteasomal degradation of serine/threonine-protein phosphatase 2A catalytic subunit alpha (PPP2CA). Inhibits PP2A-mediated dephosphorylation of WEE1, promoting ubiquitin-mediated proteolysis of WEE1, thereby releasing G2/M checkpoint. In Gallus gallus (Chicken), this protein is P2R1A-PPP2R2A-interacting phosphatase regulator 1.